Consider the following 557-residue polypeptide: Urocanate hydratase (557 aa).

The segment at 1 to 20 (MSNPRHNEREVRSPRGDELN) is disordered. Residues 52-53 (GG), Gln130, 176-178 (GMG), Glu196, Arg201, 242-243 (NA), 263-267 (QTSAH), 273-274 (YL), and Tyr322 contribute to the NAD(+) site. Cys410 is an active-site residue. NAD(+) is bound at residue Gly492.

It belongs to the urocanase family. It depends on NAD(+) as a cofactor.

It localises to the cytoplasm. It carries out the reaction 4-imidazolone-5-propanoate = trans-urocanate + H2O. It participates in amino-acid degradation; L-histidine degradation into L-glutamate; N-formimidoyl-L-glutamate from L-histidine: step 2/3. In terms of biological role, catalyzes the conversion of urocanate to 4-imidazolone-5-propionate. This chain is Urocanate hydratase, found in Brucella ovis (strain ATCC 25840 / 63/290 / NCTC 10512).